The chain runs to 121 residues: Large ribosomal subunit protein uL14c (121 aa).

Belongs to the universal ribosomal protein uL14 family. As to quaternary structure, part of the 50S ribosomal subunit.

The protein resides in the plastid. The protein localises to the chloroplast. Binds to 23S rRNA. This is Large ribosomal subunit protein uL14c from Nephroselmis olivacea (Green alga).